Consider the following 369-residue polypeptide: Variable large protein 7 (369 aa).

The signal sequence occupies residues 1-26; the sequence is MRKRISAIINKLNISIIIMTVVLMIG. Residue Cys27 is the site of N-palmitoyl cysteine attachment. The S-diacylglycerol cysteine moiety is linked to residue Cys27.

Belongs to the variable large protein (Vlp) family. Alpha subfamily.

It localises to the cell outer membrane. Its function is as follows. The Vlp and Vsp proteins are antigenically distinct proteins, only one vlp or vsp gene is transcriptionally active at any one time. Switching between these genes is a mechanism of host immune response evasion. The protein is Variable large protein 7 of Borrelia hermsii.